The chain runs to 60 residues: MAKKESFFKGVKSEMEKTSWPTKEELFKYTVIVVSTVIFFLVFFYALDLGITALKNLLFG.

Residues valine 31–isoleucine 51 traverse the membrane as a helical segment.

It belongs to the SecE/SEC61-gamma family. Component of the Sec protein translocase complex. Heterotrimer consisting of SecY, SecE and SecG subunits. The heterotrimers can form oligomers, although 1 heterotrimer is thought to be able to translocate proteins. Interacts with the ribosome. Interacts with SecDF, and other proteins may be involved. Interacts with SecA.

It is found in the cell membrane. Its function is as follows. Essential subunit of the Sec protein translocation channel SecYEG. Clamps together the 2 halves of SecY. May contact the channel plug during translocation. This Staphylococcus aureus (strain Mu50 / ATCC 700699) protein is Protein translocase subunit SecE.